Consider the following 197-residue polypeptide: Small ribosomal subunit protein uS4 (197 aa).

The S4 RNA-binding domain maps to 87 to 147; the sequence is LRLDNVLFRL…EKSKSSARYK (61 aa).

Belongs to the universal ribosomal protein uS4 family. As to quaternary structure, part of the 30S ribosomal subunit. Contacts protein S5. The interaction surface between S4 and S5 is involved in control of translational fidelity.

Functionally, one of the primary rRNA binding proteins, it binds directly to 16S rRNA where it nucleates assembly of the body of the 30S subunit. Its function is as follows. With S5 and S12 plays an important role in translational accuracy. The protein is Small ribosomal subunit protein uS4 of Lachnospira eligens (strain ATCC 27750 / DSM 3376 / VPI C15-48 / C15-B4) (Eubacterium eligens).